A 395-amino-acid chain; its full sequence is Protein PIN-LIKES 7 (395 aa).

The Lumenal segment spans residues Met-1 to Glu-8. The helical transmembrane segment at Val-9–Thr-29 threads the bilayer. The Cytoplasmic segment spans residues Asp-30–Lys-45. The chain crosses the membrane as a helical span at residues Leu-46–Leu-66. The Lumenal portion of the chain corresponds to Gln-67–Trp-73. Residues Phe-74–Val-94 form a helical membrane-spanning segment. Topologically, residues Lys-95–Leu-106 are cytoplasmic. A helical transmembrane segment spans residues Ile-107–Ile-127. Topologically, residues Cys-128 to Arg-142 are lumenal. A helical membrane pass occupies residues Ser-143–Tyr-163. At Ser-164–Glu-232 the chain is on the cytoplasmic side. The chain crosses the membrane as a helical span at residues Leu-233–Leu-253. At Arg-254–Lys-272 the chain is on the lumenal side. A helical membrane pass occupies residues Leu-273–Gly-293. At Leu-294–Ser-302 the chain is on the cytoplasmic side. Residues Val-303–Val-323 form a helical membrane-spanning segment. The Lumenal portion of the chain corresponds to Gln-324–Tyr-340. Residues Val-341–Phe-361 traverse the membrane as a helical segment. At Asp-362 to Ser-369 the chain is on the cytoplasmic side. A helical transmembrane segment spans residues Val-370 to Phe-390. The Lumenal portion of the chain corresponds to Leu-391–Ser-395.

It belongs to the auxin efflux carrier (TC 2.A.69.2) family. In terms of tissue distribution, expressed in seedlings, rosette and cauline leaves, stems and flowers.

It is found in the endoplasmic reticulum membrane. Functionally, involved in cellular auxin homeostasis by regulating auxin metabolism. Regulates intracellular auxin accumulation at the endoplasmic reticulum and thus auxin availability for nuclear auxin signaling. This is Protein PIN-LIKES 7 from Arabidopsis thaliana (Mouse-ear cress).